Reading from the N-terminus, the 173-residue chain is Co-chaperone protein HscB (173 aa).

A J domain is found at 2 to 74 (DYFTLFGLPV…LKRAEYMLSL (73 aa)).

This sequence belongs to the HscB family. As to quaternary structure, interacts with HscA and stimulates its ATPase activity. Interacts with IscU.

Co-chaperone involved in the maturation of iron-sulfur cluster-containing proteins. Seems to help targeting proteins to be folded toward HscA. The sequence is that of Co-chaperone protein HscB from Serratia proteamaculans (strain 568).